The primary structure comprises 431 residues: Glucose-1-phosphate adenylyltransferase (431 aa).

Residues Tyr108, Gly174, Glu189–Lys190, and Ser207 contribute to the alpha-D-glucose 1-phosphate site.

Belongs to the bacterial/plant glucose-1-phosphate adenylyltransferase family. As to quaternary structure, homotetramer.

The enzyme catalyses alpha-D-glucose 1-phosphate + ATP + H(+) = ADP-alpha-D-glucose + diphosphate. The protein operates within glycan biosynthesis; glycogen biosynthesis. Its function is as follows. Involved in the biosynthesis of ADP-glucose, a building block required for the elongation reactions to produce glycogen. Catalyzes the reaction between ATP and alpha-D-glucose 1-phosphate (G1P) to produce pyrophosphate and ADP-Glc. The protein is Glucose-1-phosphate adenylyltransferase of Actinobacillus succinogenes (strain ATCC 55618 / DSM 22257 / CCUG 43843 / 130Z).